Reading from the N-terminus, the 269-residue chain is Small ribosomal subunit protein eS1 (269 aa).

Disordered regions lie at residues 1–20 and 249–269; these read MAVGKNKGVSKGGKKGSKKK and AASGVVVDRPEGYEPPVQESV.

It belongs to the eukaryotic ribosomal protein eS1 family. As to quaternary structure, component of the small ribosomal subunit. Mature ribosomes consist of a small (40S) and a large (60S) subunit. The 40S subunit contains about 33 different proteins and 1 molecule of RNA (18S). The 60S subunit contains about 49 different proteins and 3 molecules of RNA (28S, 5.8S and 5S).

The protein resides in the cytoplasm. The sequence is that of Small ribosomal subunit protein eS1 from Anopheles darlingi (Mosquito).